A 426-amino-acid chain; its full sequence is Serine--tRNA ligase (426 aa).

233-235 (TAE) is an L-serine binding site. Residue 264–266 (RSE) coordinates ATP. Glu-287 is an L-serine binding site. ATP is bound at residue 351 to 354 (EISS). Residue Ser-387 coordinates L-serine.

The protein belongs to the class-II aminoacyl-tRNA synthetase family. Type-1 seryl-tRNA synthetase subfamily. Homodimer. The tRNA molecule binds across the dimer.

The protein localises to the cytoplasm. It carries out the reaction tRNA(Ser) + L-serine + ATP = L-seryl-tRNA(Ser) + AMP + diphosphate + H(+). The catalysed reaction is tRNA(Sec) + L-serine + ATP = L-seryl-tRNA(Sec) + AMP + diphosphate + H(+). Its pathway is aminoacyl-tRNA biosynthesis; selenocysteinyl-tRNA(Sec) biosynthesis; L-seryl-tRNA(Sec) from L-serine and tRNA(Sec): step 1/1. In terms of biological role, catalyzes the attachment of serine to tRNA(Ser). Is also able to aminoacylate tRNA(Sec) with serine, to form the misacylated tRNA L-seryl-tRNA(Sec), which will be further converted into selenocysteinyl-tRNA(Sec). This Pseudomonas putida (strain ATCC 47054 / DSM 6125 / CFBP 8728 / NCIMB 11950 / KT2440) protein is Serine--tRNA ligase.